A 961-amino-acid chain; its full sequence is Exportin-T (961 aa).

The protein belongs to the exportin family.

The protein resides in the cytoplasm. Its subcellular location is the nucleus. Its function is as follows. Mediates the nuclear export of aminoacylated tRNAs. The polypeptide is Exportin-T (xpot) (Danio rerio (Zebrafish)).